A 301-amino-acid chain; its full sequence is Formylmethanofuran--tetrahydromethanopterin formyltransferase-like protein (301 aa).

It belongs to the FTR family.

In Archaeoglobus fulgidus (strain ATCC 49558 / DSM 4304 / JCM 9628 / NBRC 100126 / VC-16), this protein is Formylmethanofuran--tetrahydromethanopterin formyltransferase-like protein.